The chain runs to 273 residues: Phosphate import ATP-binding protein PstB (273 aa).

Positions 1–20 (MTTVSTAAASGPAVPPPRID) are disordered. One can recognise an ABC transporter domain in the interval 27–268 (VAARNLNFYY…PSDRRTQDYI (242 aa)). Residue 59–66 (GPSGCGKS) coordinates ATP.

The protein belongs to the ABC transporter superfamily. Phosphate importer (TC 3.A.1.7) family. In terms of assembly, the complex is composed of two ATP-binding proteins (PstB), two transmembrane proteins (PstC and PstA) and a solute-binding protein (PstS).

It is found in the cell inner membrane. The enzyme catalyses phosphate(out) + ATP + H2O = ADP + 2 phosphate(in) + H(+). Its function is as follows. Part of the ABC transporter complex PstSACB involved in phosphate import. Responsible for energy coupling to the transport system. In Nitrobacter winogradskyi (strain ATCC 25391 / DSM 10237 / CIP 104748 / NCIMB 11846 / Nb-255), this protein is Phosphate import ATP-binding protein PstB.